Consider the following 271-residue polypeptide: Phosphate import ATP-binding protein PstB (271 aa).

Residues 25-266 form the ABC transporter domain; that stretch reads VDVRQLSLWY…PKHPYTEAYI (242 aa). Position 57-64 (57-64) interacts with ATP; sequence GPSGCGKS.

The protein belongs to the ABC transporter superfamily. Phosphate importer (TC 3.A.1.7) family. As to quaternary structure, the complex is composed of two ATP-binding proteins (PstB), two transmembrane proteins (PstC and PstA) and a solute-binding protein (PstS).

Its subcellular location is the cell inner membrane. The enzyme catalyses phosphate(out) + ATP + H2O = ADP + 2 phosphate(in) + H(+). Its function is as follows. Part of the ABC transporter complex PstSACB involved in phosphate import. Responsible for energy coupling to the transport system. This Thermus thermophilus (strain ATCC BAA-163 / DSM 7039 / HB27) protein is Phosphate import ATP-binding protein PstB.